The primary structure comprises 304 residues: GTPase Era (304 aa).

An Era-type G domain is found at 9-176 (KSGFVSIIGR…LLEITKHLSE (168 aa)). Residues 17 to 24 (GRPNVGKS) form a G1 region. Residue 17–24 (GRPNVGKS) participates in GTP binding. A G2 region spans residues 43–47 (QTTRN). The interval 64 to 67 (DTPG) is G3. GTP is bound by residues 64 to 68 (DTPGI) and 126 to 129 (NKID). Residues 126–129 (NKID) form a G4 region. Residues 155–157 (VSA) form a G5 region. The KH type-2 domain maps to 199-285 (IREKVLHLTR…FLELWVKVQK (87 aa)).

It belongs to the TRAFAC class TrmE-Era-EngA-EngB-Septin-like GTPase superfamily. Era GTPase family. In terms of assembly, monomer.

It localises to the cytoplasm. Its subcellular location is the cell membrane. Its function is as follows. An essential GTPase that binds both GDP and GTP, with rapid nucleotide exchange. Plays a role in 16S rRNA processing and 30S ribosomal subunit biogenesis and possibly also in cell cycle regulation and energy metabolism. The polypeptide is GTPase Era (Halalkalibacterium halodurans (strain ATCC BAA-125 / DSM 18197 / FERM 7344 / JCM 9153 / C-125) (Bacillus halodurans)).